The primary structure comprises 637 residues: Phosphomethylpyrimidine synthase (637 aa).

Residues Asn242, Met271, Tyr300, His336, 356-358 (SRG), 397-400 (DGLR), and Glu436 each bind substrate. A Zn(2+)-binding site is contributed by His440. Position 463 (Tyr463) interacts with substrate. Residue His504 coordinates Zn(2+). Positions 584, 587, and 592 each coordinate [4Fe-4S] cluster.

Belongs to the ThiC family. Homodimer. The cofactor is [4Fe-4S] cluster.

The enzyme catalyses 5-amino-1-(5-phospho-beta-D-ribosyl)imidazole + S-adenosyl-L-methionine = 4-amino-2-methyl-5-(phosphooxymethyl)pyrimidine + CO + 5'-deoxyadenosine + formate + L-methionine + 3 H(+). It participates in cofactor biosynthesis; thiamine diphosphate biosynthesis. Its function is as follows. Catalyzes the synthesis of the hydroxymethylpyrimidine phosphate (HMP-P) moiety of thiamine from aminoimidazole ribotide (AIR) in a radical S-adenosyl-L-methionine (SAM)-dependent reaction. In Bordetella bronchiseptica (strain ATCC BAA-588 / NCTC 13252 / RB50) (Alcaligenes bronchisepticus), this protein is Phosphomethylpyrimidine synthase.